A 373-amino-acid chain; its full sequence is Glutamine synthetase (373 aa).

Ala-2 bears the N-acetylalanine mark. The segment at 2-25 (ATSASSHLNKGIKQVYMSLPQGEK) is required for glutamine-induced ubiquitination by CRL4(CRBN) and proteasomal degradation. N6-acetyllysine is present on residues Lys-11 and Lys-14. Residues 24–106 (EKVQAMYIWI…VFCEVFKYNR (83 aa)) enclose the GS beta-grasp domain. The residue at position 104 (Tyr-104) is a Phosphotyrosine. The 261-residue stretch at 113–373 (LRHTCKRIMD…TGDEPFQYKN (261 aa)) folds into the GS catalytic domain. Residue Glu-134 coordinates ATP. Residues Glu-134, Glu-136, Glu-196, and Glu-203 each coordinate Mn(2+). 203 to 208 (EFQIGP) lines the ATP pocket. 246–247 (NW) lines the L-glutamate pocket. Residue His-253 coordinates Mn(2+). ATP is bound by residues 255 to 257 (NFS), Arg-319, and Arg-324. Arg-319 contacts L-glutamate. 336–338 (YFE) is an ADP binding site. Residue Glu-338 coordinates Mn(2+). Position 340 (Arg-340) interacts with L-glutamate. The residue at position 343 (Ser-343) is a Phosphoserine.

Belongs to the glutamine synthetase family. In terms of assembly, decamer; composed of two pentamers. Interacts with PALMD. Interacts with RHOJ. Interacts with BEST2; this interaction tethers a fraction of GLUL to the membrane, causing a decrease of cytosolic glutamine synthase (GS) activity and inhibits the chloride channel activity of BEST2 by affecting the gating at the aperture in the absence of intracellular glutamate. Requires Mg(2+) as cofactor. Mn(2+) serves as cofactor. In terms of processing, palmitoylated; undergoes autopalmitoylation. Acetylated by EP300/p300; acetylation is stimulated by increased glutamine levels and promotes ubiquitin-mediated proteasomal degradation. Post-translationally, ubiquitinated by ZNRF1. Ubiquitinated by the DCX (DDB1-CUL4-X-box) E3 ubiquitin-protein ligase complex called CRL4(CRBN), leading to proteasomal degradation.

Its subcellular location is the cytoplasm. It localises to the cytosol. The protein localises to the microsome. It is found in the mitochondrion. The protein resides in the cell membrane. The catalysed reaction is L-glutamate + NH4(+) + ATP = L-glutamine + ADP + phosphate + H(+). It catalyses the reaction L-cysteinyl-[protein] + hexadecanoyl-CoA = S-hexadecanoyl-L-cysteinyl-[protein] + CoA. Its activity is regulated as follows. Glutamine synthetase activity is inhibited by methionine sulfoximine (MSO). In terms of biological role, glutamine synthetase that catalyzes the ATP-dependent conversion of glutamate and ammonia to glutamine. Its role depends on tissue localization: in the brain, it regulates the levels of toxic ammonia and converts neurotoxic glutamate to harmless glutamine, whereas in the liver, it is one of the enzymes responsible for the removal of ammonia. Plays a key role in ammonium detoxification during erythropoiesis: the glutamine synthetase activity is required to remove ammonium generated by porphobilinogen deaminase (HMBS) during heme biosynthesis to prevent ammonium accumulation and oxidative stress. Essential for proliferation of fetal skin fibroblasts. Independently of its glutamine synthetase activity, required for endothelial cell migration during vascular development. Involved in angiogenesis by regulating membrane localization and activation of the GTPase RHOJ, possibly by promoting RHOJ palmitoylation. May act as a palmitoyltransferase for RHOJ: able to autopalmitoylate and then transfer the palmitoyl group to RHOJ. Plays a role in ribosomal 40S subunit biogenesis. Through the interaction with BEST2, inhibits BEST2 channel activity by affecting the gating at the aperture in the absence of intracellular L-glutamate, but sensitizes BEST2 to intracellular L-glutamate, which promotes the opening of BEST2 and thus relieves its inhibitory effect on BEST2. The sequence is that of Glutamine synthetase from Sus scrofa (Pig).